The sequence spans 614 residues: Vitamin B12 transporter BtuB (614 aa).

The first 20 residues, 1 to 20, serve as a signal peptide directing secretion; that stretch reads MIKKYWFLMVYSVTAFSVWA. The TonB box signature appears at 26–33; it reads DTLVVTAN. The TBDR plug domain occupies 38–152; sequence PLSTVLAPVT…IGGVINIITS (115 aa). Residues leucine 83, threonine 85, asparagine 92, and 110–111 each bind cyanocob(III)alamin; that span reads VS. Residues 155–614 form the TBDR beta-barrel domain; the sequence is NTGTEISAGW…EYILSGSYTF (460 aa). A run of 3 beta stranded transmembrane segments spans residues 158 to 165, 169 to 178, and 184 to 195; these read TEISAGWG, YQHYDISTHQ, and TRVTLLGDYTYT. 4 residues coordinate Ca(2+): aspartate 199, glutamine 211, aspartate 213, and aspartate 215. Transmembrane regions (beta stranded) follow at residues 217 to 227 and 232 to 248; these read FLSKTFYGKLE and DTWSGFVRGYGYNNRTK. 2 residues coordinate Ca(2+): tyrosine 249 and aspartate 250. Alanine 251 provides a ligand contact to cyanocob(III)alamin. Aspartate 261 lines the Ca(2+) pocket. 14 beta stranded membrane passes run 263–277, 279–296, 309–325, 328–337, 353–369, 371–381, 385–400, 403–417, 434–443, 449–458, 473–490, 494–509, 517–529, and 535–550; these read RKLYSQSWDAGLRYA, ETLQSQLVSSYSHSKDYN, NLDDMKQYNLQWTNSVT, HGNVGAGIDW, YDQRNTGIYLTGLQKLG, FTLEGAVRNDD, FERHTTWQSSAGWEFI, YRFIASYGTAFKAPN, KSKQWEGAFE, VNWRISGYRN, YYNDGKVHVKGIEATVNF, ALTHTVSYDYTDARNA, RRPKLQVKYQLDW, and DWGITYQYMGSRYDSD. Position 517 (arginine 517) interacts with cyanocob(III)alamin. Position 551 (tyrosine 551) interacts with cyanocob(III)alamin. A run of 3 beta stranded transmembrane segments spans residues 558-572, 585-596, and 602-614; these read SVKMGGVSLWDVAVA, IANLFNKDYETG, and AGREYILSGSYTF. The TonB C-terminal box motif lies at 597 to 614; the sequence is YGYQAAGREYILSGSYTF.

It belongs to the TonB-dependent receptor family. BtuB (TC 1.B.14.3.1) subfamily.

Its subcellular location is the cell outer membrane. Functionally, involved in the active translocation of vitamin B12 (cyanocobalamin) across the outer membrane to the periplasmic space. It derives its energy for transport by interacting with the trans-periplasmic membrane protein TonB. The sequence is that of Vitamin B12 transporter BtuB (btuB) from Escherichia coli.